Reading from the N-terminus, the 221-residue chain is Probable lipoprotein CT_734 (221 aa).

Positions 1–24 (MKKFIYKYSFGALLLLSGLSGLSS) are cleaved as a signal peptide. C25 carries N-palmitoyl cysteine lipidation. C25 is lipidated: S-diacylglycerol cysteine.

This sequence belongs to the chlamydial CPn_0875/CT_734/TC_0107 family.

It is found in the cell membrane. The protein is Probable lipoprotein CT_734 of Chlamydia trachomatis serovar D (strain ATCC VR-885 / DSM 19411 / UW-3/Cx).